The sequence spans 625 residues: uncharacterized protein (625 aa).

The zn(2)-C6 fungal-type DNA-binding region spans 23–51; it reads CLACRRKKLKCDHGRPCSNCLKRSTIQSC. Residues 93–113 show a composition bias toward polar residues; the sequence is GTKSQSDYENQQSHNLPSTPS. The disordered stretch occupies residues 93–119; the sequence is GTKSQSDYENQQSHNLPSTPSADAETQ.

It localises to the nucleus. The protein resides in the cytoplasm. Its subcellular location is the cytoskeleton. The protein localises to the spindle. This is an uncharacterized protein from Schizosaccharomyces pombe (strain 972 / ATCC 24843) (Fission yeast).